The following is a 262-amino-acid chain: Phosphonates import ATP-binding protein PhnC (262 aa).

The ABC transporter domain occupies 5–253 (IRVEKLAKTF…RFDHLYRSIN (249 aa)). Position 37 to 44 (37 to 44 (GPSGSGKS)) interacts with ATP.

Belongs to the ABC transporter superfamily. Phosphonates importer (TC 3.A.1.9.1) family. The complex is composed of two ATP-binding proteins (PhnC), two transmembrane proteins (PhnE) and a solute-binding protein (PhnD).

The protein resides in the cell inner membrane. The enzyme catalyses phosphonate(out) + ATP + H2O = phosphonate(in) + ADP + phosphate + H(+). In terms of biological role, part of the ABC transporter complex PhnCDE involved in phosphonates import. Responsible for energy coupling to the transport system. This chain is Phosphonates import ATP-binding protein PhnC, found in Escherichia coli O6:H1 (strain CFT073 / ATCC 700928 / UPEC).